The primary structure comprises 265 residues: MAVLYAGRPVQKCERSRLMFNIDQPDSAPDNEDHDGDVVMHGQGSFFGRRKGHKLRAHQADLIENLLPHLSLQIDSPAPEPLTTLFDPPVEHMRLEIGFGGGEHLIAEALAHPDTGFIGAEPYVNGMAKILARIEAENIRNIRLFAGDASELLAWVPAGSLARIDLIHPDPWPKRRHWKRRFVQDATVAAMARALTPHGEFRFVCDIDGYTAWTLAHLLRAPCFDWLAQRADDWRKPWPNYTMTRYGRKAEREGRRANYLRFERL.

Residues Glu-96, Glu-121, Asp-148, and Asp-170 each coordinate S-adenosyl-L-methionine. Residue Asp-170 is part of the active site. Lys-174 and Asp-206 together coordinate substrate.

Belongs to the class I-like SAM-binding methyltransferase superfamily. TrmB family.

It catalyses the reaction guanosine(46) in tRNA + S-adenosyl-L-methionine = N(7)-methylguanosine(46) in tRNA + S-adenosyl-L-homocysteine. It functions in the pathway tRNA modification; N(7)-methylguanine-tRNA biosynthesis. Catalyzes the formation of N(7)-methylguanine at position 46 (m7G46) in tRNA. The polypeptide is tRNA (guanine-N(7)-)-methyltransferase (Rhodopseudomonas palustris (strain ATCC BAA-98 / CGA009)).